The sequence spans 454 residues: UDP-N-acetylmuramate--L-alanine ligase (454 aa).

109-115 (GTHGKTT) is a binding site for ATP.

Belongs to the MurCDEF family.

Its subcellular location is the cytoplasm. The catalysed reaction is UDP-N-acetyl-alpha-D-muramate + L-alanine + ATP = UDP-N-acetyl-alpha-D-muramoyl-L-alanine + ADP + phosphate + H(+). The protein operates within cell wall biogenesis; peptidoglycan biosynthesis. In terms of biological role, cell wall formation. The sequence is that of UDP-N-acetylmuramate--L-alanine ligase from Protochlamydia amoebophila (strain UWE25).